We begin with the raw amino-acid sequence, 423 residues long: Elongation factor 1-alpha (423 aa).

The tr-type G domain maps to 5-221; it reads KEHINVAFIG…DLLKPPEKLV (217 aa). The segment at 14 to 21 is G1; sequence GHVDHGKS. Residue 14–21 coordinates GTP; it reads GHVDHGKS. Ser-21 is a binding site for Mg(2+). Residues 70–74 are G2; it reads GVTID. The tract at residues 91–94 is G3; it reads DCPG. GTP-binding positions include 91-95 and 146-149; these read DCPGH and NKMD. A G4 region spans residues 146-149; sequence NKMD. Residues 185 to 187 form a G5 region; that stretch reads SAY.

It belongs to the TRAFAC class translation factor GTPase superfamily. Classic translation factor GTPase family. EF-Tu/EF-1A subfamily.

It localises to the cytoplasm. It carries out the reaction GTP + H2O = GDP + phosphate + H(+). GTP hydrolase that promotes the GTP-dependent binding of aminoacyl-tRNA to the A-site of ribosomes during protein biosynthesis. The chain is Elongation factor 1-alpha from Archaeoglobus fulgidus (strain ATCC 49558 / DSM 4304 / JCM 9628 / NBRC 100126 / VC-16).